The following is a 659-amino-acid chain: Interferon-induced GTP-binding protein Mx3 (659 aa).

The region spanning 65–338 is the Dynamin-type G domain; it reads DLALPAIAVI…LISHICKSLP (274 aa). The G1 motif stretch occupies residues 75–82; that stretch reads GDQSSGKS. A GTP-binding site is contributed by 75-82; the sequence is GDQSSGKS. Positions 100 to 102 are G2 motif; that stretch reads VTR. Residues 176-179 are G3 motif; it reads DLPG. GTP is bound by residues 176–180 and 245–248; these read DLPGI and TKPD. A G4 motif region spans residues 245–248; the sequence is TKPD. A G5 motif region spans residues 277–280; that stretch reads KCRG. Residues 547–568 form a disordered region; it reads EAEEEERKHGKSRSAQSPNLQT. Positions 559 to 568 are enriched in polar residues; sequence RSAQSPNLQT. Residues 571-659 form the GED domain; the sequence is MDEIFQHLNA…AQRRLAKFPG (89 aa).

This sequence belongs to the TRAFAC class dynamin-like GTPase superfamily. Dynamin/Fzo/YdjA family.

The protein localises to the cytoplasm. Functionally, does not show activity against influenza virus or VSV; although it only differs from Mx2 by 8 positions. In Rattus norvegicus (Rat), this protein is Interferon-induced GTP-binding protein Mx3 (Mx3).